Reading from the N-terminus, the 351-residue chain is Ribosomal RNA large subunit methyltransferase M (351 aa).

S-adenosyl-L-methionine contacts are provided by residues serine 186, 219-222, aspartate 238, aspartate 258, and aspartate 274; that span reads APGG. The active-site Proton acceptor is the lysine 303.

It belongs to the class I-like SAM-binding methyltransferase superfamily. RNA methyltransferase RlmE family. RlmM subfamily. Monomer.

Its subcellular location is the cytoplasm. It catalyses the reaction cytidine(2498) in 23S rRNA + S-adenosyl-L-methionine = 2'-O-methylcytidine(2498) in 23S rRNA + S-adenosyl-L-homocysteine + H(+). In terms of biological role, catalyzes the 2'-O-methylation at nucleotide C2498 in 23S rRNA. The polypeptide is Ribosomal RNA large subunit methyltransferase M (Xylella fastidiosa (strain M12)).